Reading from the N-terminus, the 202-residue chain is Urease accessory protein UreG (202 aa).

Position 11-18 (11-18 (GPVGSGKT)) interacts with GTP.

Belongs to the SIMIBI class G3E GTPase family. UreG subfamily. Homodimer. UreD, UreF and UreG form a complex that acts as a GTP-hydrolysis-dependent molecular chaperone, activating the urease apoprotein by helping to assemble the nickel containing metallocenter of UreC. The UreE protein probably delivers the nickel.

It is found in the cytoplasm. Its function is as follows. Facilitates the functional incorporation of the urease nickel metallocenter. This process requires GTP hydrolysis, probably effectuated by UreG. In Magnetococcus marinus (strain ATCC BAA-1437 / JCM 17883 / MC-1), this protein is Urease accessory protein UreG.